Here is a 485-residue protein sequence, read N- to C-terminus: Aspartyl/glutamyl-tRNA(Asn/Gln) amidotransferase subunit B (485 aa).

It belongs to the GatB/GatE family. GatB subfamily. As to quaternary structure, heterotrimer of A, B and C subunits.

It carries out the reaction L-glutamyl-tRNA(Gln) + L-glutamine + ATP + H2O = L-glutaminyl-tRNA(Gln) + L-glutamate + ADP + phosphate + H(+). It catalyses the reaction L-aspartyl-tRNA(Asn) + L-glutamine + ATP + H2O = L-asparaginyl-tRNA(Asn) + L-glutamate + ADP + phosphate + 2 H(+). In terms of biological role, allows the formation of correctly charged Asn-tRNA(Asn) or Gln-tRNA(Gln) through the transamidation of misacylated Asp-tRNA(Asn) or Glu-tRNA(Gln) in organisms which lack either or both of asparaginyl-tRNA or glutaminyl-tRNA synthetases. The reaction takes place in the presence of glutamine and ATP through an activated phospho-Asp-tRNA(Asn) or phospho-Glu-tRNA(Gln). This chain is Aspartyl/glutamyl-tRNA(Asn/Gln) amidotransferase subunit B, found in Borreliella afzelii (strain PKo) (Borrelia afzelii).